A 120-amino-acid chain; its full sequence is Ribosome-binding factor A (120 aa).

This sequence belongs to the RbfA family. Monomer. Binds 30S ribosomal subunits, but not 50S ribosomal subunits or 70S ribosomes.

The protein localises to the cytoplasm. Its function is as follows. One of several proteins that assist in the late maturation steps of the functional core of the 30S ribosomal subunit. Associates with free 30S ribosomal subunits (but not with 30S subunits that are part of 70S ribosomes or polysomes). Required for efficient processing of 16S rRNA. May interact with the 5'-terminal helix region of 16S rRNA. The chain is Ribosome-binding factor A from Borreliella burgdorferi (strain ATCC 35210 / DSM 4680 / CIP 102532 / B31) (Borrelia burgdorferi).